The sequence spans 139 residues: Nucleoside diphosphate kinase (139 aa).

ATP contacts are provided by K11, F59, R87, T93, R104, and N114. The active-site Pros-phosphohistidine intermediate is the H117.

Belongs to the NDK family. In terms of assembly, homotetramer. The cofactor is Mg(2+).

It localises to the cytoplasm. It catalyses the reaction a 2'-deoxyribonucleoside 5'-diphosphate + ATP = a 2'-deoxyribonucleoside 5'-triphosphate + ADP. The catalysed reaction is a ribonucleoside 5'-diphosphate + ATP = a ribonucleoside 5'-triphosphate + ADP. In terms of biological role, major role in the synthesis of nucleoside triphosphates other than ATP. The ATP gamma phosphate is transferred to the NDP beta phosphate via a ping-pong mechanism, using a phosphorylated active-site intermediate. This chain is Nucleoside diphosphate kinase, found in Flavobacterium psychrophilum (strain ATCC 49511 / DSM 21280 / CIP 103535 / JIP02/86).